A 630-amino-acid chain; its full sequence is Pentatricopeptide repeat-containing protein At2g03880, mitochondrial (630 aa).

The transit peptide at 1-76 directs the protein to the mitochondrion; sequence MKSVMSKIKL…LIKCCISNRA (76 aa). PPR repeat units follow at residues 60 to 94, 95 to 125, 126 to 160, 161 to 192, 193 to 223, 224 to 258, 259 to 289, 292 to 322, 323 to 357, 358 to 388, and 394 to 424; these read DSAT…GHRP, MMFL…MPQR, NVIS…NVRP, NVYT…GLES, DVFV…MVTG, DAIV…GFIA, EQAT…IVKY, DLIL…MKER, DVIT…GTKP, NYIT…MKKL, and VREH…MECE. Residues 429-504 form a type E motif region; the sequence is TWRTLLGACR…EPGCSWIEVN (76 aa). Positions 505–535 are type E(+) motif; sequence KQIHAFIIGDNSHPQIVEVSKKLNQLIHRLT. Residues 536-630 form a type DYW motif region; sequence GIGYVPETNF…DGKCSCGDYW (95 aa).

It belongs to the PPR family. PCMP-H subfamily.

The protein resides in the mitochondrion. The sequence is that of Pentatricopeptide repeat-containing protein At2g03880, mitochondrial (PCMP-H44) from Arabidopsis thaliana (Mouse-ear cress).